The chain runs to 500 residues: Glycerol kinase (500 aa).

ADP is bound at residue Thr15. The ATP site is built by Thr15, Thr16, and Ser17. Thr15 is a binding site for sn-glycerol 3-phosphate. Arg19 is a binding site for ADP. Sn-glycerol 3-phosphate-binding residues include Arg85, Glu86, Tyr137, and Asp245. Arg85, Glu86, Tyr137, Asp245, and Gln246 together coordinate glycerol. Residues Thr267 and Gly310 each contribute to the ADP site. Residues Thr267, Gly310, Gln314, and Gly411 each contribute to the ATP site. Positions 411 and 415 each coordinate ADP.

This sequence belongs to the FGGY kinase family.

It catalyses the reaction glycerol + ATP = sn-glycerol 3-phosphate + ADP + H(+). It functions in the pathway polyol metabolism; glycerol degradation via glycerol kinase pathway; sn-glycerol 3-phosphate from glycerol: step 1/1. Inhibited by fructose 1,6-bisphosphate (FBP). Its function is as follows. Key enzyme in the regulation of glycerol uptake and metabolism. Catalyzes the phosphorylation of glycerol to yield sn-glycerol 3-phosphate. In Aeromonas salmonicida (strain A449), this protein is Glycerol kinase.